The chain runs to 632 residues: Tetratricopeptide repeat protein 39B (632 aa).

TPR repeat units lie at residues 343-376 (SLVLFYHARIELLKGNLEEAQEVFRKCVSVQEEW), 535-568 (CLVKLLKGCCLKNLQRPLQAELCYNHVVESEKLL), and 576-609 (PFTLFELASLYKSQGEIDKAIKFLETARNNYKDY).

Belongs to the TTC39 family.

Its function is as follows. Regulates high density lipoprotein (HDL) cholesterol metabolism by promoting the ubiquitination and degradation of the oxysterols receptors LXR (NR1H2 and NR1H3). This is Tetratricopeptide repeat protein 39B (TTC39B) from Macaca fascicularis (Crab-eating macaque).